The following is a 470-amino-acid chain: Carboxypeptidase Q (470 aa).

A signal peptide spans 1–18 (MRSLFFLFIVHLLALGSG). Positions 19–42 (KAVFKNGVSQRTFREIKEEIANYE) are excised as a propeptide. Residue Asn59 is glycosylated (N-linked (GlcNAc...) asparagine). The Zn(2+) site is built by His288 and Asp300. Glu334 acts as the Nucleophile in catalysis. Residue Glu335 participates in Zn(2+) binding. Residue Asn351 is glycosylated (N-linked (GlcNAc...) asparagine). Asp362 provides a ligand contact to Zn(2+). Asn394 carries an N-linked (GlcNAc...) asparagine glycan. Position 432 (His432) interacts with Zn(2+).

Belongs to the peptidase M28 family. As to quaternary structure, homodimer. The monomeric form is inactive while the homodimer is active. In terms of processing, N-glycosylated. The secreted form is modified by hybrid or complex type oligosaccharide chains.

The protein localises to the endoplasmic reticulum. The protein resides in the golgi apparatus. It localises to the lysosome. Its subcellular location is the secreted. Functionally, carboxypeptidase that may play an important role in the hydrolysis of circulating peptides. Catalyzes the hydrolysis of dipeptides with unsubstituted terminals into amino acids. May play a role in the liberation of thyroxine hormone from its thyroglobulin (Tg) precursor. In Mus musculus (Mouse), this protein is Carboxypeptidase Q (Cpq).